We begin with the raw amino-acid sequence, 1083 residues long: MKGTRAIGSVPERSPAGVDLSLTGLPPPVSRRPGSAATTKPIVRSVSVVTGSEQKRKVLEATGPGGSQAINNLRRSNSTTQVSQPRSGSPRPTEPTDFLMLFEGSPSGKKRPASLSTAPSEKGATWNVLDDQPRGFTLPSNARSSSALDSPAGPRRKECTVALAPNFTANNRSNKGAVGNCVTTMVHNRYTPSERAPPLKSSNQTAPSLNNIIKAATCEGSESSGFGKLPKNVSSATHSARNNTGGSTGLPRRKEVTEEEAERFIHQVNQATVTIQRWYRHQVQRRGAGAARLEHLLQAKREEQRQRSGEGTLLDLHQQKEAARRKAREEKARQARRAAIQELQQKRALRAQKASTAERGPPENPRETRVPGMRQPAQELSPTPGGTAHQALKANNTGGGLPAAGPGDRCLPTSDSSPEPQQPPEDRTQDVLAQDAAGDNLEMMAPSRGSAKSRGPLEELLHTLQLLEKEPDVLPRPRTHHRGRYAWASEVTTEDDASSLTADNLEKFGKLSAFPEPPEDGTLLSEAKLQSIMSFLDEMEKSGQDQLDSQQEGWVPEAGPGPLELGSEVSTSVMRLKLEVEEKKQAMLLLQRALAQQRDLTARRVKETEKALSRQLQRQREHYEATIQRHLAFIDQLIEDKKVLSEKCEAVVAELKQEDQRCTERVAQAQAQHELEIKKLKELMSATEKARREKWISEKTKKIKEVTVRGLEPEIQKLIARHKQEVRRLKSLHEAELLQSDERASQRCLRQAEELREQLEREKEALGQQERERARQRFQQHLEQEQWALQQQRQRLYSEVAEERERLGQQAARQRAELEELRQQLEESSSALTRALRAEFEKGREEQERRHQMELNTLKQQLELERQAWEAGRTRKEEAWLLNREQELREEIRKGRDKEIELVIHRLEADMALAKEESEKAAESRIKRLRDKYEAELSELEQSERKLQERCSELKGQLGEAEGENLRLQGLVRQKERALEDAQAVNEQLSSERSNLAQVIRQEFEDRLAASEEETRQAKAELATLQARQQLELEEVHRRVKTALARKEEAVSSLRTQHEAAVKRADHLEELLEQHRRPTPSTK.

2 disordered regions span residues 1–155 and 220–258; these read MKGT…AGPR and GSES…EVTE. Residues 1-250 form an interaction with PLK4 region; sequence MKGTRAIGSV…RNNTGGSTGL (250 aa). Residues Ser-14 and Ser-35 each carry the phosphoserine modification. Ser-47 bears the Phosphoserine; by MAPKAPK2 mark. The segment covering 68–87 has biased composition (polar residues); the sequence is QAINNLRRSNSTTQVSQPRS. Position 78 is a phosphoserine; by MAPKAPK2 and PLK4 (Ser-78). Residues Ser-89, Ser-105, Ser-114, Ser-146, and Ser-150 each carry the phosphoserine modification. A compositionally biased stretch (polar residues) spans 138-148; the sequence is LPSNARSSSAL. Positions 232-245 are enriched in polar residues; that stretch reads NVSSATHSARNNTG. The IQ domain occupies 269–289; sequence NQATVTIQRWYRHQVQRRGAG. Residues 301-429 form a disordered region; sequence REEQRQRSGE…PQQPPEDRTQ (129 aa). 2 stretches are compositionally biased toward basic and acidic residues: residues 317 to 333 and 360 to 369; these read HQQK…EKAR and GPPENPRETR. A Phosphoserine modification is found at Ser-381. Thr-383 is modified (phosphothreonine). Phosphoserine is present on residues Ser-453, Ser-489, Asp-496, Ser-499, Ser-731, and Ser-798. The segment covering 1047 to 1076 has biased composition (basic and acidic residues); it reads KEEAVSSLRTQHEAAVKRADHLEELLEQHR. A disordered region spans residues 1047 to 1083; that stretch reads KEEAVSSLRTQHEAAVKRADHLEELLEQHRRPTPSTK.

The protein belongs to the CEP131 family. In terms of assembly, self-associates. Associates with the centriolar satellite BBSome protein complex. Interacts with BBS4; the interaction limits BBS4 availability for association with the BBSome complex, and hence negatively regulates ciliary localization of the BBSome complex. Interacts with MIB1. Interacts with PCM1; the interaction increases in response to ultraviolet light (UV) radiation. Associates with microtubules; association with microtubules is reduced in response to cellular stress, such as UV stimulation, in a process that requires p38 MAP kinase signaling. Interacts with CEP290, DCTN1, PCNT, PCM1 and CEP152. Interacts with 14-3-3 proteins following UV-induced phosphorylation by MAPKAPK2; this inhibits formation of novel centriolar satellites. Interacts with SDCCAG8. Interacts with CCDC61. Interacts with PLK4. Ubiquitinated. Undergoes monoubiquitination catalyzed by the E3 ubiquitin-protein ligase MIB1 in proliferating cells, preventing cilia formation. Monoubiquitination by MIB1 is inhibited in response to cellular stress, such as ultraviolet light (UV) radiation or heat shock, resulting in cilia formation initiation. Post-translationally, MAPKAPK2-dependent phosphorylation at Ser-47 and Ser-78 occurs in response to cellular stress such as exposure to ultraviolet irradiation and promotes binding to 14-3-3 proteins which leads to cytoplasmic sequestration of CEP131 and blocks formation of new centriolar satellites. Phosphorylation at Ser-78 mediated by PLK4 is essential for proper organization and integrity of centriolar satellites but is dispensable for its localization to centrioles and its function in ciliogenesis.

The protein localises to the cytoplasm. It is found in the cytoskeleton. The protein resides in the microtubule organizing center. Its subcellular location is the centrosome. It localises to the centriolar satellite. The protein localises to the centriole. It is found in the cilium basal body. The protein resides in the cytoplasmic vesicle. Its subcellular location is the secretory vesicle. It localises to the acrosome. In terms of biological role, component of centriolar satellites contributing to the building of a complex and dynamic network required to regulate cilia/flagellum formation. In proliferating cells, MIB1-mediated ubiquitination induces its sequestration within centriolar satellites, precluding untimely cilia formation initiation. In contrast, during normal and ultraviolet or heat shock cellular stress-induced ciliogenesis, its non-ubiquitinated form is rapidly displaced from centriolar satellites and recruited to centrosome/basal bodies in a microtubule- and p38 MAPK-dependent manner. Also acts as a negative regulator of BBSome ciliary trafficking. Plays a role in sperm flagellar formation; may be involved in the regulation of intraflagellar transport (IFT) and/or intramanchette (IMT) trafficking, which are important for axoneme extension and/or cargo delivery to the nascent sperm tail. Required for optimal cell proliferation and cell cycle progression; may play a role in the regulation of genome stability in non-ciliogenic cells. Involved in centriole duplication. Required for CEP152, WDR62 and CEP63 centrosomal localization and promotes the centrosomal localization of CDK2. Essential for maintaining proper centriolar satellite integrity. The protein is Centrosomal protein of 131 kDa (CEP131) of Homo sapiens (Human).